A 226-amino-acid polypeptide reads, in one-letter code: tRNA (guanine-N(7)-)-methyltransferase (226 aa).

Residues Glu-57, Glu-82, Asp-109, and Asp-132 each coordinate S-adenosyl-L-methionine. Asp-132 is an active-site residue. Residues Lys-136, Asp-168, and 205 to 208 each bind substrate; that span reads TKFE.

Belongs to the class I-like SAM-binding methyltransferase superfamily. TrmB family.

It catalyses the reaction guanosine(46) in tRNA + S-adenosyl-L-methionine = N(7)-methylguanosine(46) in tRNA + S-adenosyl-L-homocysteine. Its pathway is tRNA modification; N(7)-methylguanine-tRNA biosynthesis. Its function is as follows. Catalyzes the formation of N(7)-methylguanine at position 46 (m7G46) in tRNA. In Legionella pneumophila subsp. pneumophila (strain Philadelphia 1 / ATCC 33152 / DSM 7513), this protein is tRNA (guanine-N(7)-)-methyltransferase.